A 92-amino-acid polypeptide reads, in one-letter code: Putative phosphotransferase enzyme IIB component BB_0367 (92 aa).

The PTS EIIB type-1 domain occupies 10–92 (IKVAEHIVEC…ILYMMNEQKQ (83 aa)).

The protein localises to the cytoplasm. Its function is as follows. The phosphoenolpyruvate-dependent sugar phosphotransferase system (PTS), a major carbohydrate active -transport system, catalyzes the phosphorylation of incoming sugar substrates concomitant with their translocation across the cell membrane. The sequence is that of Putative phosphotransferase enzyme IIB component BB_0367 from Borreliella burgdorferi (strain ATCC 35210 / DSM 4680 / CIP 102532 / B31) (Borrelia burgdorferi).